Consider the following 559-residue polypeptide: Alpha-(1,6)-fucosyltransferase (559 aa).

Residues 1–4 (MLKC) lie on the Cytoplasmic side of the membrane. The helical; Signal-anchor for type II membrane protein transmembrane segment at 5–24 (IAAVGTVVWMTMFLFLYSQL) threads the bilayer. The Lumenal segment spans residues 25 to 559 (SNNQSGGDSI…RKFKFEALLD (535 aa)). An N-linked (GlcNAc...) asparagine glycan is attached at Asn27. Residues 63-74 (QERNDQHKKIME) are compositionally biased toward basic and acidic residues. Residues 63–90 (QERNDQHKKIMEQSHQLPPNPENPSLPK) form a disordered region. Positions 80 to 90 (PPNPENPSLPK) are enriched in pro residues. N-linked (GlcNAc...) asparagine glycosylation is present at Asn134. Disulfide bonds link Cys188–Cys251, Cys196–Cys214, and Cys202–Cys206. The GT23 domain maps to 190–480 (EAKTLVCNLD…ADDGSKFHSL (291 aa)). The important for donor substrate binding stretch occupies residues 351–352 (RR). An intrachain disulfide couples Cys452 to Cys459. Residues 489–550 (QQAHEVIVIE…PSYKVVNDWR (62 aa)) enclose the SH3 domain.

This sequence belongs to the glycosyltransferase 23 family. It depends on Mn(2+) as a cofactor. The cofactor is Mg(2+).

It is found in the golgi apparatus. The protein resides in the golgi stack membrane. The enzyme catalyses N(4)-{beta-D-GlcNAc-(1-&gt;2)-alpha-D-Man-(1-&gt;3)-[beta-D-GlcNAc-(1-&gt;2)-alpha-D-Man-(1-&gt;6)]-beta-D-Man-(1-&gt;4)-beta-D-GlcNAc-(1-&gt;4)-beta-D-GlcNAc}-L-asparaginyl-[protein] + GDP-beta-L-fucose = an N(4)-{beta-D-GlcNAc-(1-&gt;2)-alpha-D-Man-(1-&gt;3)-[beta-D-GlcNAc-(1-&gt;2)-alpha-D-Man-(1-&gt;6)]-beta-D-Man-(1-&gt;4)-beta-D-GlcNAc-(1-&gt;4)-[alpha-L-Fuc-(1-&gt;6)]-beta-D-GlcNAc}-L-asparaginyl-[protein] + GDP + H(+). The protein operates within protein modification; protein glycosylation. Inhibited by Fe(3+), Ni(2+) and Cu(2+). Functionally, catalyzes the addition of fucose in alpha 1-6 linkage to the first GlcNAc residue, next to the peptide chains in N-glycans. The addition is prevented if the GlcNAc residue is already fucosylated. Involved in susceptibility to the nematotoxic C.cinerea galectin Cgl2, likely by contributing to the synthesis of core alpha-1,6-fucosylated N-glycans to which Cgl2 binds. This is Alpha-(1,6)-fucosyltransferase from Caenorhabditis elegans.